The following is a 391-amino-acid chain: Serine acetyltransferase 3, mitochondrial (391 aa).

Disordered regions lie at residues 40–82 (KHHT…HDDE) and 353–375 (VGNP…IPGL). Residues 45–56 (SPPPSPPPPPPM) show a composition bias toward pro residues.

This sequence belongs to the transferase hexapeptide repeat family. Homomultimer. Interacts with OASC. Component of the cysteine synthase complex (CSC) composed of two OAS-TL dimers and one SAT hexamer. As to expression, ubiquitous with higher levels in leaves and siliques. Localized in vascular tissues, particularly in phloem.

The protein resides in the mitochondrion. It catalyses the reaction L-serine + acetyl-CoA = O-acetyl-L-serine + CoA. It functions in the pathway amino-acid biosynthesis; L-cysteine biosynthesis; L-cysteine from L-serine: step 1/2. The polypeptide is Serine acetyltransferase 3, mitochondrial (SAT3) (Arabidopsis thaliana (Mouse-ear cress)).